Reading from the N-terminus, the 399-residue chain is Acetate kinase (399 aa).

Asparagine 7 is a Mg(2+) binding site. Lysine 14 serves as a coordination point for ATP. Arginine 91 is a substrate binding site. Aspartate 148 acts as the Proton donor/acceptor in catalysis. Residues 208–212 (HLGNG), 283–285 (DFR), and 331–335 (GIGEN) each bind ATP. Glutamate 384 is a Mg(2+) binding site.

This sequence belongs to the acetokinase family. As to quaternary structure, homodimer. It depends on Mg(2+) as a cofactor. The cofactor is Mn(2+).

The protein resides in the cytoplasm. It catalyses the reaction acetate + ATP = acetyl phosphate + ADP. It participates in metabolic intermediate biosynthesis; acetyl-CoA biosynthesis; acetyl-CoA from acetate: step 1/2. Catalyzes the formation of acetyl phosphate from acetate and ATP. Can also catalyze the reverse reaction. The chain is Acetate kinase from Acetivibrio thermocellus (strain ATCC 27405 / DSM 1237 / JCM 9322 / NBRC 103400 / NCIMB 10682 / NRRL B-4536 / VPI 7372) (Clostridium thermocellum).